An 87-amino-acid chain; its full sequence is U3-theraphotoxin-Hhn1a 5 (87 aa).

Residues 1–24 (MVNMKASMFLTFAGLVLLFVVCYA) form the signal peptide. A propeptide spanning residues 25 to 52 (SESEEKEFPKEMLSSIFAVDNDFKQEER) is cleaved from the precursor. 3 cysteine pairs are disulfide-bonded: Cys54–Cys67, Cys61–Cys72, and Cys66–Cys79.

It belongs to the neurotoxin 10 (Hwtx-1) family. 51 (Hntx-8) subfamily. Hntx-8 sub-subfamily. In terms of tissue distribution, expressed by the venom gland.

The protein localises to the secreted. Its function is as follows. Ion channel inhibitor. This Cyriopagopus hainanus (Chinese bird spider) protein is U3-theraphotoxin-Hhn1a 5.